The following is a 225-amino-acid chain: Ethylene-responsive transcription factor 3 (225 aa).

Residues 1-12 (MRRGRAAAAPAP) show a composition bias toward low complexity. Disordered stretches follow at residues 1–29 (MRRG…IRFR) and 82–193 (NFPL…NIAS). The segment at residues 27–84 (RFRGVRKRPWGRFAAEIRDPWKKTRVWLGTFDSAEDAARAYDAAARALRGPKAKTNFP) is a DNA-binding region (AP2/ERF). A compositionally biased stretch (low complexity) spans 118–134 (SQRPTSSSMSSTVESFS). The span at 176–185 (DHGDCEKEND) shows a compositional bias: basic and acidic residues. The short motif at 202 to 208 (FDLNLPP) is the EAR-like (transcriptional repression) element.

It belongs to the ethylene-response factor family. Class 2 subfamily.

The protein resides in the nucleus. In terms of biological role, transcription factor that binds to the GCC-box pathogenesis-related promoter element. Involved in the regulation of gene expression by stress factors and by components of stress signal transduction pathways. Probably acts as a transcriptional repressor and may regulate other AtERFs. The polypeptide is Ethylene-responsive transcription factor 3 (ERF3) (Nicotiana tabacum (Common tobacco)).